We begin with the raw amino-acid sequence, 599 residues long: DNA mismatch repair protein MutL (599 aa).

The protein belongs to the DNA mismatch repair MutL/HexB family.

This protein is involved in the repair of mismatches in DNA. It is required for dam-dependent methyl-directed DNA mismatch repair. May act as a 'molecular matchmaker', a protein that promotes the formation of a stable complex between two or more DNA-binding proteins in an ATP-dependent manner without itself being part of a final effector complex. This Rhodopseudomonas palustris (strain BisB18) protein is DNA mismatch repair protein MutL.